The primary structure comprises 391 residues: Formate-dependent phosphoribosylglycinamide formyltransferase (391 aa).

Residues 18–19 (EL) and Glu78 contribute to the N(1)-(5-phospho-beta-D-ribosyl)glycinamide site. ATP-binding positions include Arg110, Lys151, 156–161 (SSGKGQ), 191–194 (EEFI), and Glu199. The ATP-grasp domain occupies 115 to 305 (ELVSRDLKIK…EFELHLRAFL (191 aa)). 2 residues coordinate Mg(2+): Glu264 and Glu276. N(1)-(5-phospho-beta-D-ribosyl)glycinamide is bound by residues Asp283, Lys353, and 360 to 361 (RR).

This sequence belongs to the PurK/PurT family. As to quaternary structure, homodimer.

It catalyses the reaction N(1)-(5-phospho-beta-D-ribosyl)glycinamide + formate + ATP = N(2)-formyl-N(1)-(5-phospho-beta-D-ribosyl)glycinamide + ADP + phosphate + H(+). Its pathway is purine metabolism; IMP biosynthesis via de novo pathway; N(2)-formyl-N(1)-(5-phospho-D-ribosyl)glycinamide from N(1)-(5-phospho-D-ribosyl)glycinamide (formate route): step 1/1. Functionally, involved in the de novo purine biosynthesis. Catalyzes the transfer of formate to 5-phospho-ribosyl-glycinamide (GAR), producing 5-phospho-ribosyl-N-formylglycinamide (FGAR). Formate is provided by PurU via hydrolysis of 10-formyl-tetrahydrofolate. In Prochlorococcus marinus (strain MIT 9312), this protein is Formate-dependent phosphoribosylglycinamide formyltransferase.